A 135-amino-acid chain; its full sequence is Mu-like prophage FluMu protein gp46 (135 aa).

The protein to phage Mu protein gp46.

This is Mu-like prophage FluMu protein gp46 from Haemophilus influenzae (strain ATCC 51907 / DSM 11121 / KW20 / Rd).